Consider the following 305-residue polypeptide: MSGAGSKRKNVFIEKATKLFTTYDKMIVAEADFVGSSQLQKIRKSIRGIGAVLMGKKTMIRKVIRDLADSKPELDALNTYLKQNTCIIFCKDNIAEVKRVINTQRVGAPAKAGVFAPNDVIIPAGPTGMEPTQTSFLQDLKIATKINRGQIDIVNEVHIIKTGQKVGASEATLLQKLNIKPFTYGLEPKIIYDAGACYSPSISEEDLINKFKQGIFNIAAISLEIGYPTVASIPHSVMNAFKNLLAISFETSYTFDAAEKFKSAAAAAPVAAAPSAAAPAAAAKKVVVEEKKEESDDDMGMGLFD.

The protein belongs to the universal ribosomal protein uL10 family. P0 forms a pentameric complex by interaction with dimers of P1 and P2. In terms of processing, phosphorylated.

In terms of biological role, ribosomal protein P0 is the functional equivalent of E.coli protein L10. This chain is Large ribosomal subunit protein uL10 (rplp0), found in Dictyostelium discoideum (Social amoeba).